A 214-amino-acid polypeptide reads, in one-letter code: A-type ATP synthase subunit D (214 aa).

This sequence belongs to the V-ATPase D subunit family. As to quaternary structure, has multiple subunits with at least A(3), B(3), C, D, E, F, H, I and proteolipid K(x).

It is found in the cell membrane. Its function is as follows. Component of the A-type ATP synthase that produces ATP from ADP in the presence of a proton gradient across the membrane. The protein is A-type ATP synthase subunit D of Thermococcus gammatolerans (strain DSM 15229 / JCM 11827 / EJ3).